Here is a 228-residue protein sequence, read N- to C-terminus: Phosphoribosylformylglycinamidine synthase subunit PurQ (228 aa).

The 224-residue stretch at 3–226 (FAVIVFPGSN…VNYWRETHVV (224 aa)) folds into the Glutamine amidotransferase type-1 domain. The active-site Nucleophile is cysteine 86. Active-site residues include histidine 195 and glutamate 197.

In terms of assembly, part of the FGAM synthase complex composed of 1 PurL, 1 PurQ and 2 PurS subunits.

It localises to the cytoplasm. It catalyses the reaction N(2)-formyl-N(1)-(5-phospho-beta-D-ribosyl)glycinamide + L-glutamine + ATP + H2O = 2-formamido-N(1)-(5-O-phospho-beta-D-ribosyl)acetamidine + L-glutamate + ADP + phosphate + H(+). It carries out the reaction L-glutamine + H2O = L-glutamate + NH4(+). Its pathway is purine metabolism; IMP biosynthesis via de novo pathway; 5-amino-1-(5-phospho-D-ribosyl)imidazole from N(2)-formyl-N(1)-(5-phospho-D-ribosyl)glycinamide: step 1/2. In terms of biological role, part of the phosphoribosylformylglycinamidine synthase complex involved in the purines biosynthetic pathway. Catalyzes the ATP-dependent conversion of formylglycinamide ribonucleotide (FGAR) and glutamine to yield formylglycinamidine ribonucleotide (FGAM) and glutamate. The FGAM synthase complex is composed of three subunits. PurQ produces an ammonia molecule by converting glutamine to glutamate. PurL transfers the ammonia molecule to FGAR to form FGAM in an ATP-dependent manner. PurS interacts with PurQ and PurL and is thought to assist in the transfer of the ammonia molecule from PurQ to PurL. The sequence is that of Phosphoribosylformylglycinamidine synthase subunit PurQ from Geobacillus thermodenitrificans (strain NG80-2).